The following is a 470-amino-acid chain: Argininosuccinate synthase (470 aa).

ATP-binding positions include 17–25 (AFSGGLDTS) and alanine 43. An L-citrulline-binding site is contributed by tyrosine 99. Residues glycine 129 and threonine 131 each contribute to the ATP site. 3 residues coordinate L-aspartate: threonine 131, asparagine 135, and aspartate 136. Asparagine 135 is an L-citrulline binding site. ATP is bound at residue aspartate 136. Residues arginine 139 and serine 192 each contribute to the L-citrulline site. Aspartate 194 contributes to the ATP binding site. L-citrulline-binding residues include threonine 201, glutamate 203, and glutamate 280. The segment at 448-470 (IASRGESSGDELLDRAAMESGTD) is disordered.

The protein belongs to the argininosuccinate synthase family. Type 2 subfamily. Homotetramer.

The protein localises to the cytoplasm. It carries out the reaction L-citrulline + L-aspartate + ATP = 2-(N(omega)-L-arginino)succinate + AMP + diphosphate + H(+). It functions in the pathway amino-acid biosynthesis; L-arginine biosynthesis; L-arginine from L-ornithine and carbamoyl phosphate: step 2/3. The protein is Argininosuccinate synthase of Kineococcus radiotolerans (strain ATCC BAA-149 / DSM 14245 / SRS30216).